A 364-amino-acid polypeptide reads, in one-letter code: Beta-parvin (364 aa).

Residues 1–57 (MSSAPRSPTPRPRRMKKDESFLGKLGGTLARKRRAREVSDLQEEGKNAINSPMSPAL) form a disordered region. S7 is modified (phosphoserine). Residues 36 to 46 (REVSDLQEEGK) show a composition bias toward basic and acidic residues. S54 is modified (phosphoserine). Calponin-homology (CH) domains are found at residues 87-194 (KELV…MHFR) and 254-361 (SVVK…TKYK).

The protein belongs to the parvin family. In terms of assembly, interacts with DYSF. Interacts with ILK, ARHGEF6, PXN (via LD motifs), ACTN2 and actin. Expressed predominantly in heart and skeletal muscle.

The protein localises to the cell junction. It localises to the focal adhesion. It is found in the cell membrane. The protein resides in the cytoplasm. Its subcellular location is the cytoskeleton. The protein localises to the cell projection. It localises to the lamellipodium. It is found in the myofibril. The protein resides in the sarcomere. Its subcellular location is the z line. In terms of biological role, adapter protein that plays a role in integrin signaling via ILK and in activation of the GTPases CDC42 and RAC1 by guanine exchange factors, such as ARHGEF6. Is involved in the reorganization of the actin cytoskeleton and formation of lamellipodia. Plays a role in cell adhesion, cell spreading, establishment or maintenance of cell polarity, and cell migration. This is Beta-parvin (PARVB) from Homo sapiens (Human).